A 7481-amino-acid polypeptide reads, in one-letter code: MNHIPVNRGVCLMGRSQNSEFETASDEPIAVIGLSCRLPKASGPQELWQLLDDGASAVTRVPADRETPPSTEEESADGEAAGARWGGFLDRVDTFDAGFFGISPREAAAMDPQQRLVLELSWEALEGAGLVPATLRDTGLGVFVGAARDDYATLYRRREGRAVDHHAMTGLHRSLIANRISYALGAHGPSMVVDTGQSSSLVAVHLACESLRRGESDIALAGGVNLNIAAESARETAAFGGLSPDGQCFTFDARANGFVRGEGGGLVVLKTLRRALADGDLVHGVILASAVNNDGPSDTLTTPSRRAQESLLTRVYRRAGVTPTEVGYVELHGTGTKVGDPIEAAALGAVLGTGRDTPLPVGSIKTNIGHLEGAAGIAGLIKALLQLRRRRLVPSLNFSTPNPDIPLDALNLRVQQESAPWATPSGGGRTLVAGVSSFGMGGTNCHVVVSAAPVPEDGETTSEAGATGPDSGPALLPWVVSARSPQALRDQAGRLAAWADSPAGREASPVDIGWSLATSRTHFEYRAVVSGSDRDELVASLRALASGSPVTAAGAVDGGGRLGLVFSGQGSQRAGMGRELYVAFPVFAEAFDEVCGVLDEVMGALPPSEGWAGSLREVMFEVSSDLLDETGFTQPALFAFEVALYRLLESWGVAGEVVAGHSVGEIAAVHVAGVLSLADACALVAARGRLMQGLPSGGAMVAVEASEEEVTALLAGREGEVGIGAVNGPRSVVVSGGVAVVEEVAAHFAGLGRRARRLKVSHAFHSPLMDPMLEDFGRVVAGLSFAVPELTVVSGLTGAVVSADELCSVGYWVRHAREAVRFADAVGAMAGVGVGRFVEVGPGGVLSALVRECLAEGGAGSVVAAVRGNRAEPVALLSAVGELFADGYPVDWTAYFAGWPAARVELPTYAFQRSRHWLENVPELAVSTTPPAVPREPVTPDSDHPDPVETVRQLTAHVLGLTAAADVEMTRSFKDLGFDSLMSVELRDRLCAATGLSLATTLLYDHPSPAETAEFVRARLTGDEAAAVEVVAARAVEDEPIAVVAMSCRFPGGVRTPEDLWELVRDRVDAVSVFPSDRGWNADAGLFPPAGGFLYDGHHFDAEFFGISPREALAMDPQQRLLLETSWEAFERAGIDPVSLRGSRTGVFVGATAQDYTPKLGEPADGLEGHLLTGGTVSVASGRISYFLGLEGPAVTVDTACSSSLVSLHLACRSLRQGETTLALAGGVTLMATPGMFAEFSRQGGLAADGRCKAFAEAADGTGWAEGVGLVLLERLSDARRNGHPVLAVVRGSAVNQDGASNGLTAPNGPSQQRVIRQALADARLAPADVDLMEAHGTGTRLGDPIEAQALLATYGQGRSGDRPLWLGSVKSNIGHTQAAAGVAGLIKTVMAMRHGTMPATLHVDRPSSHVDWSTGAVELLTEAQPWPDTERPRRAAVSSFGVSGTNAHVILEQATEPAALDAAPDAIVSDAVVAWPLSARDVGALREQAVRLVARVTGDPYVRPADVGHSLAATRSSFEHRAVVVGRERAELLAGLEALASGETAANLATGRASADGAGKVVFVFPGQGSQWPGMGLELAAHSPVFAAVLEDCGRALAAYVDWDGHTLHEVLAQEDGAPSLERVDVVQPALWAVMVALAALWRSHGVQPDAVVGHSQGEIAAACVAGALTLDEAAQVVSLRSRAITALAGAGQMVSVPLPEADTAEWIRPWADAGQIGIAAVNGPGSTVVSGDSAAMDELMEALAAQDVRARRIPVDYASHSPQVARIRDELLHALDGLTPRPATVPVFSTVTGEWLDDTTPMDAEYWYRNLRQTVRFEEAVRALADSGCGVFIEASPHPVLTIGVQETLDVLDRTGVVTGSLRRQKGGPDRFLSSLAQVHTHGGRVDWDTVFAGTGATRTDLPTYPFQRHRYWLERPQAPAVAPAASPAASVSETDSTRYRVVFKPLPEPTAARLSGTWLLVVPDTDEPDARVDAVTGALVTAGATVERIVVEAGADRADLAELLAALATDVGGVRGVVSLLALSEDADAMRPSVPSGLASTLTLVQALGDADVSAPLWCLTRGAVSVGASDRLDSPVQALVWGLGRAAAVEHPERWGGLLDLPATLTGRVLDRLVGVLAADGDEDQVAVRAAGVFGRRLVRGNSAPTRIDHSWQAGGTVLVTGGTGALGARVARWLVDSGAEHVVVASRQGADAPGADRLRDELTGLGARVTPVACDVSDRSAVAELVDRCAEQGDPIRAVVHTAGVGVTKPLADTTPDDLAVSFDAKVAGATHLADALGADLDAFVLFSSAAGVWGSGGQGAYGAANAYLDALAAQRAADGLAATAVAWGPWDGGGMSADAAVIDMDALRRSGLTAMDPDRAIDALDRALTDGETALTVVDVDWTRFAEVFTTARRSPLLADLPEAARLVGPAPTARENSSPVAARLAKASSAAEGRRVLLDLVRGRVADVLGHATPDTIRADRPFKDLGFNSLMTLELRSGLNEATGLRLSATTLFDHPTPSALAEHLAGELLGTPRAEAGPEMPATAPEVTEDPIAIVAMSCRFPGGVGSPEALWRLVADRRDVISGMPADRGWDIDGIYDPVPGVPGRTYTRQGGFLDGVGEFDAEFFGISPREATAMDPQQRLLLETSWEAFERAGIDPTQLRGDSVGVFVGCTGQDYVPRLHETSDELGGYALTGAAGSVASGRVAYTFGLEGPAVTVDTGCSASLVALHLAVQSLSRGECSLALAGGVTVMSNPGTFIEFSRQRGLAADGRCKAFSDSADGTGWAEGVGMLLVERLSDARRNGHEVLAVVRGSAINQDGASNGLTAPNGRSQQRVIRQALASASLTPAEVDVVEAHGTGTKLGDPIEAQALLATYGQDRPAERPLLLGALKSNIGHTQAAAGVAGVIKMVLAMRHGVAPQTLHVEQPTAEVDWSAGAVELLTEARPWPDADRPRRAGVSAFGVGGTNAHVIIEEAQSAPAQERTAPEPPAALPWLVSGATPDALRAQAERLLTHLADQPETHAADVAYSLSLTRSSLDHRAAVVAADRDELLAGLAALAEGRSAPGLVRGAPHSGDRVAFVFPGQGSQWPGMAQELAAAFPAFAARLRACEDALAEFVDWSLTDVLSEAPDAPPLDRVDVVQPVLWAVMVSLAELWRSYGVEPDAVLGHSQGEIAAACVAGALTLQDAARVVALRSKAIVAIAGQGGMLSVPLSREGLRPHLARWQDRLSVAAVNGPETVVLSGDVQAVDGLCAELQGEQIRAKKIQVDYASHSAHVEAIEAELFDALAPITPRAGSVPFFSTVTGDWYDTTGLDAGYWYRNLRQTVELHRATEALVEQGFGVFVESSPHPVLAVGMQDTVEAAGGDAVILGSLRRDDGGPDRFLRSLAEAHTHAVGVDWHALFTDGAGHRVELPTYAFQRKRYWLQDTAPEHRADAPAVDPVDAAFWEAVEREDLDALAGVLDLGTPDDTASLDTVLPALPVLSSWRRKRLDRSTVDAWRYRVEWRRIDDAPAPATLTGTWLVVIPEGYEADERVTASARALAERGADVVEVRVDEAGEDRTALAERLSDTGADTGPVAGVLSFLALAEQGFPQHPEVPTGLALTLHLVQALGDAGIDAPLWSVTSGAVSTGDDEAPSHPVQAHIWGMGRVAALEHSERWGGLVDLPEAPDEQAARRLGAVLADTRGEDQVAIRPSGLYGRRLARAAATEAGERQRWTPRGTVLITGGTGALGAHVARRLAAQGAEHLVLVSRSGEAAPGADDLRTKLGVPVTVAACDIADRDQVAALLARLEADGTPVRTVVHTAGVARLTPLAQTDLAELADVLSGKAAGARHLLELLDLDNLDTFVLFSSIAAAWGVADHGAYAAANAYLDAMALQYRAQGLPVSSVGWGPWDGDGMVSLNKLLARRGIPVIAPDLAITALQQALDERDTYVAVADVDWDRFTQVFTSARPSPLLADFTETAADDRETASATAHGTDSELVRRLNALPEDERAQALQDLVLTEAAAVLGHTTTDALGAVRPYRDLGFDSLTSVEFRNRLRDATGLALPATLVFDHPTPQATTEYLLQRIAGDKPIVDRASSSAVAAVEADDPIAIVAMGCRYPGGVASPEELWELMAAEGDAISGFPTDRGWDLDALYDPDPDRAGHTYVREGGFLHDAAEFDAEFFGISPREASAMDPQQRLLLETSWEAFERAGIDPAALRGSATGVFVGSNYQDYGLGSGSGSQQSSGVSEGHELIGSAPSVLSGRLSYTFGLEGPAVTVDTACSSSLVALHLAVQSLRQGESDLALAGGVAYMANPRAFVGFSRQRGLARDARCKAFADRADGMTLAEGVGLVLLERLSDARRLGHPVLAVVRGSAINQDGASNGLTAPNGPAQQRVIRQALANARLTPSEVDVVEAHGTGTALGDPIEAQALLATYGQERVEGQPLWLGSVKSNIGHTQAAAGVASVIKTVLAMGRGTVPATLHVDRPSSHVDWSAGAVELLTEARAWPENGHPRRAGVSSFGISGTNAHVILEQAPAESGEPPQQDLPVDGESAASVVPWVVSARSVRALQAQAGQLAAWAASPAGEQASPADVAQALATTRTFFEYRTVVVGGDRAELVETLRSLSTDPSAAGTVRRADTDGGGRLGLVFSGQGSQRAGMGRELYVAFPVFAEAFDEVCGVLDEVMGALPPSEGWAGSLREVMFDVAGGSLDETGFTQPALFAFEVALYRLLESWGVAGEVVAGHSVGEIAAVHVAGVLSLADACALVAARGRLMQGLPSGGAMVAVEASEEEVTALLAGREGEVGIGAVNGPRSVVVSGGVAVVEEVAAHFAGLGRRARRLKVSHAFHSPLMDPMLEDFGRVVAGLSFAVPELTVVSGLTGAVVSADELCSVGYWVRHAREAVRFADAVGAMAGVGVGRFVEVGPGGVLSALVRECLAEGGAGSVVAAVRGNRAEPVALVSAVGELFADGYPVDWTAYFAGWPAARVELPTYAFQRSRYWLEELAGTAVRRTEAGGQDEVDAAFWEAVEQGDLSSLGTGEGVDGEARLADVLPVLSSWRRQAGQVSLADSWRYRVTWNALPEPGVASFGGTWLLLAPAGSEAAGSLVRSLAEAMAEHGAEVVTVDLGHPDSDRARDALAEQITGRLDGLAPGQVGGVVSLLALAEGTDPHHPTVSRGLALTLSAVQALGDAGVTAPLWCLTRGAVSAGATSGPDEPVQAQVWGLGRVAALEHPDRWGGLLDLPEQVDSRTVRRLVRALAAGHRPGGEDQIALRTAGVLARRLVQDAAPAGDSVAWTPSGTVLVTGGTGAVGGHVARWLAARGAERVVLVSRRGPEAPGAQALHDELTEAGVRVRLVACDLRDQEAVTALVAGLADEGDLTAVVHAAGVLDDGVLASLSVERCAEVLAAKAQAAHHLDLATREVDLDAFVLFSSASGVLGSAGQANYAAANAYLDALAELRHALGLPAVSLAWGRWADGGMADQDVVAGRLDRDGWPAMAAEAALNAMARAVTAGRPAVMVADVDWQRFAPAFTAARPSPLLSALPQAQLPTAAAHGPAEGEQSSWASRLAELPAAEQQTALLDLIRGQVASVLGHASVQTIDPARAFKEIGFDSLTAVELRNRLNAATGLALPTTLVFDYPTPEALAEYVGSEVLGTSSSAAVGGPLVVAAVDEPVAIIGMSCRFPGGVQSPEELWDLVAGGRDTISSFPADRGWDIDTLFDPDGERSGTSSTRYGAFLDGAADFDPAFFDIGPREATAMDPQQRLLLETAWEAFERAGIDPAALRGSATGVFTGTNGQDYATLASGAAAEFEGYLGIGNAGSVISGRLAYTFGLEGPAMTVDTACSASLVALHLAAQALRQGECSLALAGGATVMATPGAFVEFSRQRGLAPDGRCKAFSASADGTGWGEGAGMLLLERLSDAERNGHPILAVVRGSAVNQDGASNGLTAPNGPAQQRVIRQALANARLSASEVDVVEAHGTGTKLGDPIEAQALLATYGQDRAEDRPLWLGSVKSNLGHTQAAAGVAGIIKSVMAMRHGTLPATLHVDEPTPEVNWSTGAVELLTESRPWPATDHVRRAAVSSFGVSGTNAHVILEQAADPVAEAESGAALVPDAVPVPWVVSARSADAVREQARRLHTHLMTGREWRPADVGYSLATARSRFEHRAVVLGEDQGELLEALEALAEGRGDSRVRVGAGLAGGRTGFVFAGQGSQRLGMGGRLREMFPVFGEAWDEVVAELDGRLGRPLGEVVFAEEGSEQASLVDRTEFTQPALFAFEVALFRLLESWGVVPDVVAGHSIGELAAAYVAGVLSLSDACALVVARGRLMQALPAGGAMVAVQVTEAEARRLVEGEPSGAVDIAAVNGPESVVIAGDEDVVLRVQEIVRGRGRKTKRLTVSHAFHSPRMEPMLDEFRRVAETVTYHEPRIAVVSAVSGEVAGAELRSAEYWTRHVREAVRFYDAVRCLRSEGVSTFVEVGPDGALSALGQDCLVGEEARGTEFVSTVRAGRDEAESVVAAVGAAHVRGVPVDWAAYYAPYGPRRADLPTYAFEHQRYWLDTSARPGRDATGLGLGSAEHPLLGAAVALADGDGVLLTGRLSLATHPWLADHQVQGAVLFPGTAFVELALRAGEQVGADCVEELTLEVPLVLPERGGVQVQVVVGAADEQGGRPVTVHSRPETGVDEPWTRHATGVLASGAATVPAETGELAVWPPQGATAVDIDGLYDRLVDGGFGYGPVFQGLRAVWRRGSEVFAEVALDDTHRDGAGEFGLHPALLDAALHAIGFGEFVSDGGAGVLPFSWNGVHLYASGADALRVRVSGVGVGANEVALVVADGSGRPVAAVESLVLRPVSADTIAAGAGARQSLFRVGWRQVAVPDQAGAGEWVALDRGAGWAQGEGCEVLPDLAALGSAVSAGRSVPRLVVAHFAADREVPVTAGVRGVTAEGLELIQSWLADERFADSRLVIMTRQAVAVDAGEGVFDLGAAALWGLVRTAQSEQPGRVVLVDVDDLDAVSRVVGIGDEPQLAVRDGRVFVPRLMRAEAIDGVPVWDPEGTLLITGASGALGGVVARHVVREWGVRHLVLASRRGAEAPGMTELVAELGELGASAAPVACDVADRDALAAVLAGIPAVHRLAGVVHAAGVLDDGVVGSLTPERLETVLAPKADAAWHLHELAAELDLSVFVLFSSAASVFGGAGQGNYAAANAFLDALAARRRADGLVATSLSWGLWDQAGGMTGQLGEADVARMSRSGVLPISVGEALPLLDAGVTGGDAWLAPVRLDLAALRQQAIATGGVPALLRDLVRVPNRRKAETGGSSTGGSRSTLLDKLAGLTDAEREQELLDFVCEHTAAVLGHSGAGMVDPGRGFLEAGVDSLAAVELRNRIGGVLGIRLSATLVFDYPSPVLLAGHIGEQLALDEPAPEPMMAAELERLEAAVTAGRFDDASRDEVAVRLRKLLTYFDTVADTARGETDDGDVASASVDELFALLDEELDDR.

The interval 24–1020 (ASDEPIAVIG…ETAEFVRARL (997 aa)) is loading module (LM). The Ketosynthase family 3 (KS3) 1 domain maps to 26–451 (DEPIAVIGLS…GTNCHVVVSA (426 aa)). The tract at residues 60–80 (RVPADRETPPSTEEESADGEA) is disordered. Gln197 (for decarboxylation activity of LM) is an active-site residue. Catalysis depends on Ser662, which acts as the For acyltransferase activity of LM. Positions 945-1020 (PDPVETVRQL…ETAEFVRARL (76 aa)) constitute a Carrier 1 domain. At Ser980 the chain carries O-(pantetheine 4'-phosphoryl)serine. Residues 1038–1454 (DEPIAVVAMS…GTNAHVILEQ (417 aa)) form the Ketosynthase family 3 (KS3) 2 domain. 4 module regions span residues 1038–2517 (DEPI…AGEL), 2538–4063 (EDPI…LQRI), 4084–5636 (DDPI…GSEV), and 5655–7400 (DEPV…GEQL). Catalysis depends on for beta-ketoacyl synthase 1 activity residues Cys1201, His1336, and His1376. Residues 2442–2517 (RVLLDLVRGR…ALAEHLAGEL (76 aa)) enclose the Carrier 2 domain. Ser2477 carries the post-translational modification O-(pantetheine 4'-phosphoryl)serine. The region spanning 2538-2964 (EDPIAIVAMS…GTNAHVIIEE (427 aa)) is the Ketosynthase family 3 (KS3) 3 domain. Residues Cys2711, His2846, and His2886 each act as for beta-ketoacyl synthase 2 activity in the active site. In terms of domain architecture, Carrier 3 spans 3988-4063 (QALQDLVLTE…ATTEYLLQRI (76 aa)). Ser4023 is modified (O-(pantetheine 4'-phosphoryl)serine). Positions 4084 to 4514 (DDPIAIVAMG…GTNAHVILEQ (431 aa)) constitute a Ketosynthase family 3 (KS3) 4 domain. Catalysis depends on for beta-ketoacyl synthase 3 activity residues Cys4261, His4396, and His4436. The Carrier 4 domain occupies 5561 to 5636 (TALLDLIRGQ…ALAEYVGSEV (76 aa)). An O-(pantetheine 4'-phosphoryl)serine modification is found at Ser5596. Residues 5655-6081 (DEPVAIIGMS…GTNAHVILEQ (427 aa)) enclose the Ketosynthase family 3 (KS3) 5 domain. Active-site for beta-ketoacyl synthase 4 activity residues include Cys5828, His5963, and His6003. Positions 6561-6685 (HPLLGAAVAL…GVLASGAATV (125 aa)) are N-terminal hotdog fold. The region spanning 6561–6841 (HPLLGAAVAL…LRPVSADTIA (281 aa)) is the PKS/mFAS DH domain. His6593 acts as the Proton acceptor; for dehydratase activity in catalysis. Residues 6700 to 6841 (ATAVDIDGLY…LRPVSADTIA (142 aa)) are C-terminal hotdog fold. The active-site Proton donor; for dehydratase activity is Asp6761. Positions 7325–7400 (QELLDFVCEH…LLAGHIGEQL (76 aa)) constitute a Carrier 5 domain. Position 7360 is an O-(pantetheine 4'-phosphoryl)serine (Ser7360).

As to quaternary structure, homodimer. The loading module (LM, residues 13-926) dimerizes. LM cross-links to its cognate acyl-carrier domain in a manner that seems physiological; mutation of residues in the 2 domains alters reactions efficiency in a manner predicted by the cross-linked crystal. Requires pantetheine 4'-phosphate as cofactor.

The protein operates within antibiotic biosynthesis. Functionally, first protein in the synthesis of the 16-membered macrolide antibiotics FD-891 and FD-892. Composed of 5 modules; the first is a loading module (LM) that synthesizes a starter unit used by the first elongation module for polyketide chain elongation. The starter unit is extended by multiple rounds of addition of malonyl-CoA or methylmalonyl-CoA, and other modifications to help generate the final products. The loading module (residues 1-927, LM with an inactive acyltransferase domain) preferentially decarboxylates malonyl-GfsA acyl carrier protein of the LM (ACP-LM) over methylmalonyl-GfsA ACP-LM and has no activity on malonyl-CoA or methymalonyl-CoA. LM decarboxylates malonyl-ACP-LM better than the malonyl-ACP-1 module of GfsA (i.e. the next module in the same protein) and has no activity on other malonyl-ACP modules. The chain is Polyketide synthase GfsA from Streptomyces halstedii.